We begin with the raw amino-acid sequence, 526 residues long: Protein DETOXIFICATION 43 (526 aa).

Topologically, residues 1–36 are cytoplasmic; it reads MTETGDDLATVKKPIPFLVIFKDLRHVFSRDTTGRE. A helical membrane pass occupies residues 37–57; the sequence is ILGIAFPAALALAADPIASLI. Topologically, residues 58–59 are extracellular; it reads DT. Residues 60–80 traverse the membrane as a helical segment; sequence AFVGRLGAVQLAAVGVSIAIF. At 81-170 the chain is on the cytoplasmic side; sequence NQASRITIFP…NKKEKRTIRT (90 aa). Residues 133-166 form a disordered region; the sequence is ISSPTSNDTNQPQQPPAPDTKSNSGNKSNKKEKR. Positions 134–144 are enriched in polar residues; it reads SSPTSNDTNQP. The chain crosses the membrane as a helical span at residues 171-191; the sequence is ASTAMILGLILGLVQAIFLIF. The Extracellular segment spans residues 192 to 215; it reads SSKLLLGVMGVKPNSPMLSPAHKY. A helical membrane pass occupies residues 216–236; the sequence is LSIRALGAPALLLSLAMQGIF. The Cytoplasmic portion of the chain corresponds to 237-244; it reads RGFKDTKT. The helical transmembrane segment at 245–267 threads the bilayer; the sequence is PLFATVVADVINIVLDPIFIFVL. Topologically, residues 268–270 are extracellular; the sequence is RLG. The chain crosses the membrane as a helical span at residues 271–293; the sequence is IIGAAIAHVISQYFMTLILFVFL. At 294 to 316 the chain is on the cytoplasmic side; the sequence is AKKVNLIPPNFGDLQFGRFLKNG. The chain crosses the membrane as a helical span at residues 317–337; sequence LLLLARTIAVTFCQTLAAAMA. Residues 338-353 are Extracellular-facing; that stretch reads ARLGTTPMAAFQICLQ. A helical membrane pass occupies residues 354-374; it reads VWLTSSLLNDGLAVAGQAILA. The Cytoplasmic segment spans residues 375-396; the sequence is CSFAEKDYNKVTAVASRVLQMG. A helical transmembrane segment spans residues 397-417; it reads FVLGLGLSVFVGLGLYFGAGV. Residues 418–426 lie on the Extracellular side of the membrane; that stretch reads FSKDPAVIH. The chain crosses the membrane as a helical span at residues 427–447; it reads LMAIGIPFIAATQPINSLAFV. At 448–457 the chain is on the cytoplasmic side; the sequence is LDGVNFGASD. Residues 458–478 traverse the membrane as a helical segment; sequence FAYTAYSMVGVAAISIAAVIY. The Extracellular segment spans residues 479–484; that stretch reads MAKTNG. Residues 485–505 form a helical membrane-spanning segment; it reads FIGIWIALTIYMALRAITGIA. Topologically, residues 506–526 are cytoplasmic; sequence RMATGTGPWRFLRGRSSSSSS.

It belongs to the multi antimicrobial extrusion (MATE) (TC 2.A.66.1) family. In terms of tissue distribution, expressed in roots in the pericycle and cells internal to the pericycle and surrounding the vascular tissue. Also expressed in seed and flower.

The protein resides in the cell membrane. Functionally, citrate transporter responsible for loading citrate into xylem tissues, which helps facilitate iron transport to shoots. Mediates the citrate release in the apoplastic spaces during plant development allowing iron nutrition between symplastically disconnected tissues. This is Protein DETOXIFICATION 43 from Arabidopsis thaliana (Mouse-ear cress).